The primary structure comprises 249 residues: Zinc finger AN1 and C2H2 domain-containing stress-associated protein 13 (249 aa).

AN1-type zinc fingers lie at residues 7–55 (PDLG…RGDV) and 95–145 (AVKK…KPES). Residues cysteine 13, cysteine 18, cysteine 28, cysteine 31, cysteine 36, histidine 39, histidine 45, cysteine 47, cysteine 101, cysteine 106, cysteine 118, cysteine 121, cysteine 126, histidine 129, histidine 135, and cysteine 137 each coordinate Zn(2+). A disordered region spans residues 194–213 (FASGNDGNSEKTQERNGKQN). Positions 201–210 (NSEKTQERNG) are enriched in basic and acidic residues. The C2H2-type zinc finger occupies 220–243 (DVCPKCSRGFRDPVDLLKHIDKDH).

Functionally, may be involved in environmental stress response. In Arabidopsis thaliana (Mouse-ear cress), this protein is Zinc finger AN1 and C2H2 domain-containing stress-associated protein 13 (SAP13).